The sequence spans 102 residues: UPF0147 protein MTH_1407 (102 aa).

It belongs to the UPF0147 family.

This is UPF0147 protein MTH_1407 from Methanothermobacter thermautotrophicus (strain ATCC 29096 / DSM 1053 / JCM 10044 / NBRC 100330 / Delta H) (Methanobacterium thermoautotrophicum).